The following is a 152-amino-acid chain: MTHIIIDGDACPVVDSIIDLTTETGIFVTIIRSFSHFSNQLYPPHVSTLYVDDGPDAVDYKIVQLSTKDDIVITQDYGLASLLVDKVLIVMHHNGKIYNSKNIQQLLDKRYMNAQIRKQGGRHKGPPPFTKQDQKVFEQSLLKVIHRIKELD.

The protein belongs to the UPF0178 family.

The chain is UPF0178 protein SAB0630c from Staphylococcus aureus (strain bovine RF122 / ET3-1).